A 361-amino-acid polypeptide reads, in one-letter code: Protein-glutamate methylesterase/protein-glutamine glutaminase 1 (361 aa).

The Response regulatory domain occupies 10–127 (KVLVVDDSAL…REGIEEKAQE (118 aa)). The residue at position 61 (aspartate 61) is a 4-aspartylphosphate. The 193-residue stretch at 167 to 359 (FATTDKLIAV…ASVKRWYAEN (193 aa)) folds into the CheB-type methylesterase domain. Residues serine 179, histidine 205, and aspartate 301 contribute to the active site.

The protein belongs to the CheB family. Phosphorylated by CheA. Phosphorylation of the N-terminal regulatory domain activates the methylesterase activity.

It is found in the cytoplasm. It catalyses the reaction [protein]-L-glutamate 5-O-methyl ester + H2O = L-glutamyl-[protein] + methanol + H(+). The catalysed reaction is L-glutaminyl-[protein] + H2O = L-glutamyl-[protein] + NH4(+). In terms of biological role, involved in chemotaxis. Part of a chemotaxis signal transduction system that modulates chemotaxis in response to various stimuli. Catalyzes the demethylation of specific methylglutamate residues introduced into the chemoreceptors (methyl-accepting chemotaxis proteins or MCP) by CheR. Also mediates the irreversible deamidation of specific glutamine residues to glutamic acid. The sequence is that of Protein-glutamate methylesterase/protein-glutamine glutaminase 1 from Hahella chejuensis (strain KCTC 2396).